Reading from the N-terminus, the 286-residue chain is Small ribosomal subunit protein uS3 (286 aa).

The region spanning 39-107 is the KH type-2 domain; sequence VREYLKKKLA…PVHVNIEEIR (69 aa). Positions 213–286 are disordered; that stretch reads QAGAGTAAPQ…KPGVNDAAAS (74 aa). Over residues 241-262 the composition is skewed to basic and acidic residues; it reads GRADARSDGKAGEKKGPRKSDN.

The protein belongs to the universal ribosomal protein uS3 family. Part of the 30S ribosomal subunit. Forms a tight complex with proteins S10 and S14.

Its function is as follows. Binds the lower part of the 30S subunit head. Binds mRNA in the 70S ribosome, positioning it for translation. The protein is Small ribosomal subunit protein uS3 of Nitrosospira multiformis (strain ATCC 25196 / NCIMB 11849 / C 71).